A 547-amino-acid polypeptide reads, in one-letter code: Probable bifunctional tRNA threonylcarbamoyladenosine biosynthesis protein (547 aa).

Residues 1-329 (MGNSNELICI…FRTDMVDVNW (329 aa)) are kae1. Positions 112, 116, and 133 each coordinate Fe cation. L-threonylcarbamoyladenylate is bound by residues 133-137 (YVSGG), Asp-165, Gly-178, Glu-182, and Asn-262. Asp-290 provides a ligand contact to Fe cation. The region spanning 346–547 (QIPRHLIGKG…KEVEKRGRYL (202 aa)) is the Protein kinase domain. ATP is bound by residues 352–360 (IGKGAEADI) and Lys-373. The Proton acceptor; for kinase activity role is filled by Asp-465.

The protein in the N-terminal section; belongs to the KAE1 / TsaD family. In the C-terminal section; belongs to the protein kinase superfamily. Tyr protein kinase family. BUD32 subfamily. Component of the KEOPS complex that consists of Kae1, Bud32, Cgi121 and Pcc1; the whole complex dimerizes. It depends on Fe(2+) as a cofactor.

The protein resides in the cytoplasm. The catalysed reaction is L-seryl-[protein] + ATP = O-phospho-L-seryl-[protein] + ADP + H(+). It catalyses the reaction L-threonyl-[protein] + ATP = O-phospho-L-threonyl-[protein] + ADP + H(+). It carries out the reaction L-threonylcarbamoyladenylate + adenosine(37) in tRNA = N(6)-L-threonylcarbamoyladenosine(37) in tRNA + AMP + H(+). Functionally, required for the formation of a threonylcarbamoyl group on adenosine at position 37 (t(6)A37) in tRNAs that read codons beginning with adenine. Is a component of the KEOPS complex that is probably involved in the transfer of the threonylcarbamoyl moiety of threonylcarbamoyl-AMP (TC-AMP) to the N6 group of A37. The Kae1 domain likely plays a direct catalytic role in this reaction. The Bud32 domain probably displays kinase activity that regulates Kae1 function. In Methanococcus vannielii (strain ATCC 35089 / DSM 1224 / JCM 13029 / OCM 148 / SB), this protein is Probable bifunctional tRNA threonylcarbamoyladenosine biosynthesis protein.